A 121-amino-acid polypeptide reads, in one-letter code: Small ribosomal subunit protein uS13 (121 aa).

The segment at 90–121 (RHRRGLPTRGQNTKNNARTRKGPTKTVAGKKK) is disordered. Basic residues predominate over residues 106–121 (ARTRKGPTKTVAGKKK).

This sequence belongs to the universal ribosomal protein uS13 family. In terms of assembly, part of the 30S ribosomal subunit. Forms a loose heterodimer with protein S19. Forms two bridges to the 50S subunit in the 70S ribosome.

Functionally, located at the top of the head of the 30S subunit, it contacts several helices of the 16S rRNA. In the 70S ribosome it contacts the 23S rRNA (bridge B1a) and protein L5 of the 50S subunit (bridge B1b), connecting the 2 subunits; these bridges are implicated in subunit movement. Contacts the tRNAs in the A and P-sites. In Enterococcus faecalis (strain ATCC 700802 / V583), this protein is Small ribosomal subunit protein uS13.